Consider the following 595-residue polypeptide: Isoprene synthase, chloroplastic (595 aa).

The transit peptide at 1 to 37 directs the protein to the chloroplast; that stretch reads MATELLCLHRPISLTHKLFRNPLPKVIQATPLTLKLR. Aspartate 345 serves as a coordination point for dimethylallyl diphosphate. Residues aspartate 345 and aspartate 349 each coordinate Mg(2+). The DDXXD motif signature appears at 345-349; the sequence is DDIYD. Dimethylallyl diphosphate is bound by residues glutamate 423, arginine 486, and asparagine 489. Mg(2+) contacts are provided by asparagine 489, serine 493, and glutamate 497.

It belongs to the terpene synthase family. Tpsb subfamily. Mg(2+) is required as a cofactor. Mn(2+) serves as cofactor.

Its subcellular location is the plastid. The protein resides in the chloroplast. The enzyme catalyses dimethylallyl diphosphate = isoprene + diphosphate. Functionally, lyase that catalyzes the formation of isoprene from dimethylallyl diphosphate. The protein is Isoprene synthase, chloroplastic (ISPS) of Populus tremuloides (Quaking aspen).